A 232-amino-acid chain; its full sequence is Ubiquinone biosynthesis O-methyltransferase (232 aa).

The S-adenosyl-L-methionine site is built by arginine 36, glycine 55, aspartate 76, and leucine 120.

Belongs to the methyltransferase superfamily. UbiG/COQ3 family.

It catalyses the reaction a 3-demethylubiquinol + S-adenosyl-L-methionine = a ubiquinol + S-adenosyl-L-homocysteine + H(+). It carries out the reaction a 3-(all-trans-polyprenyl)benzene-1,2-diol + S-adenosyl-L-methionine = a 2-methoxy-6-(all-trans-polyprenyl)phenol + S-adenosyl-L-homocysteine + H(+). It participates in cofactor biosynthesis; ubiquinone biosynthesis. O-methyltransferase that catalyzes the 2 O-methylation steps in the ubiquinone biosynthetic pathway. The polypeptide is Ubiquinone biosynthesis O-methyltransferase (Pseudomonas fluorescens (strain SBW25)).